The following is a 404-amino-acid chain: Trigger factor (404 aa).

The 66-residue stretch at 160–225 (KDHLFVRTEE…VLEVKTLKLP (66 aa)) folds into the PPIase FKBP-type domain.

Belongs to the FKBP-type PPIase family. Tig subfamily.

Its subcellular location is the cytoplasm. The catalysed reaction is [protein]-peptidylproline (omega=180) = [protein]-peptidylproline (omega=0). Its function is as follows. Involved in protein export. Acts as a chaperone by maintaining the newly synthesized protein in an open conformation. Functions as a peptidyl-prolyl cis-trans isomerase. This is Trigger factor from Thermus thermophilus (strain ATCC 27634 / DSM 579 / HB8).